A 301-amino-acid chain; its full sequence is Ribosomal RNA small subunit methyltransferase A (301 aa).

Asn18, Leu20, Gly45, Glu66, Asp91, and Asn112 together coordinate S-adenosyl-L-methionine. The tract at residues 267 to 301 is disordered; that stretch reads PPEAAPVKEKRRMAKNKMTEPANNNLNENSAPEVD. The span at 287 to 301 shows a compositional bias: polar residues; sequence PANNNLNENSAPEVD.

The protein belongs to the class I-like SAM-binding methyltransferase superfamily. rRNA adenine N(6)-methyltransferase family. RsmA subfamily.

The protein localises to the cytoplasm. It carries out the reaction adenosine(1518)/adenosine(1519) in 16S rRNA + 4 S-adenosyl-L-methionine = N(6)-dimethyladenosine(1518)/N(6)-dimethyladenosine(1519) in 16S rRNA + 4 S-adenosyl-L-homocysteine + 4 H(+). Specifically dimethylates two adjacent adenosines (A1518 and A1519) in the loop of a conserved hairpin near the 3'-end of 16S rRNA in the 30S particle. May play a critical role in biogenesis of 30S subunits. The polypeptide is Ribosomal RNA small subunit methyltransferase A (Colwellia psychrerythraea (strain 34H / ATCC BAA-681) (Vibrio psychroerythus)).